The chain runs to 254 residues: Small ribosomal subunit protein uS2 (254 aa).

The protein belongs to the universal ribosomal protein uS2 family.

In Borrelia duttonii (strain Ly), this protein is Small ribosomal subunit protein uS2.